The primary structure comprises 361 residues: Beta-hexosaminidase (361 aa).

Substrate-binding positions include aspartate 69, arginine 77, arginine 144, and 174-175 (KH). Histidine 187 acts as the Proton donor/acceptor in catalysis. Residue aspartate 258 is the Nucleophile of the active site.

The protein belongs to the glycosyl hydrolase 3 family. NagZ subfamily.

The protein resides in the cytoplasm. It carries out the reaction Hydrolysis of terminal non-reducing N-acetyl-D-hexosamine residues in N-acetyl-beta-D-hexosaminides.. It participates in cell wall biogenesis; peptidoglycan recycling. Functionally, plays a role in peptidoglycan recycling by cleaving the terminal beta-1,4-linked N-acetylglucosamine (GlcNAc) from peptide-linked peptidoglycan fragments, giving rise to free GlcNAc, anhydro-N-acetylmuramic acid and anhydro-N-acetylmuramic acid-linked peptides. The chain is Beta-hexosaminidase from Neisseria meningitidis serogroup C / serotype 2a (strain ATCC 700532 / DSM 15464 / FAM18).